The chain runs to 264 residues: tRNA pseudouridine synthase A (264 aa).

D52 acts as the Nucleophile in catalysis. Y110 contacts substrate.

It belongs to the tRNA pseudouridine synthase TruA family. Homodimer.

The catalysed reaction is uridine(38/39/40) in tRNA = pseudouridine(38/39/40) in tRNA. In terms of biological role, formation of pseudouridine at positions 38, 39 and 40 in the anticodon stem and loop of transfer RNAs. This chain is tRNA pseudouridine synthase A, found in Wigglesworthia glossinidia brevipalpis.